The sequence spans 320 residues: Ubiquitin-like domain-containing CTD phosphatase 1 (320 aa).

One can recognise a Ubiquitin-like domain in the interval 6-77 (VVVIVKWSGK…LKPNFKLMMV (72 aa)). An FCP1 homology domain is found at 136–296 (PREGKKLLVL…LKLSDYLRKI (161 aa)). Mg(2+) is bound by residues Asp-146, Asp-148, and Asp-255.

It depends on Mg(2+) as a cofactor.

Its subcellular location is the nucleus. The enzyme catalyses O-phospho-L-seryl-[protein] + H2O = L-seryl-[protein] + phosphate. It carries out the reaction O-phospho-L-threonyl-[protein] + H2O = L-threonyl-[protein] + phosphate. In terms of biological role, dephosphorylates 26S nuclear proteasomes, thereby decreasing their proteolytic activity. Recruited to the 19S regulatory particle of the 26S proteasome where it dephosphorylates 19S component Rpt1 which impairs Rpt1 ATPase activity and disrupts 26S proteasome assembly. This Drosophila melanogaster (Fruit fly) protein is Ubiquitin-like domain-containing CTD phosphatase 1.